The chain runs to 464 residues: tRNA modification GTPase MnmE (464 aa).

(6S)-5-formyl-5,6,7,8-tetrahydrofolate is bound by residues Arg27, Glu90, and Lys129. The TrmE-type G domain occupies 222–384 (GIALVLAGSV…LYDKIRSLTC (163 aa)). GTP-binding positions include 232 to 237 (NVGKSS), 251 to 257 (SSYAGTT), and 276 to 279 (DTAG). Mg(2+)-binding residues include Ser236 and Thr257. A (6S)-5-formyl-5,6,7,8-tetrahydrofolate-binding site is contributed by Lys464.

It belongs to the TRAFAC class TrmE-Era-EngA-EngB-Septin-like GTPase superfamily. TrmE GTPase family. Homodimer. Heterotetramer of two MnmE and two MnmG subunits. K(+) serves as cofactor.

Its subcellular location is the cytoplasm. Exhibits a very high intrinsic GTPase hydrolysis rate. Involved in the addition of a carboxymethylaminomethyl (cmnm) group at the wobble position (U34) of certain tRNAs, forming tRNA-cmnm(5)s(2)U34. The protein is tRNA modification GTPase MnmE of Borrelia turicatae (strain 91E135).